Reading from the N-terminus, the 908-residue chain is AdoMet-dependent rRNA methyltransferase SPB1 (908 aa).

Positions 57, 59, 77, 93, and 118 each coordinate S-adenosyl-L-methionine. Lys-158 functions as the Proton acceptor in the catalytic mechanism. Residues 378–422 adopt a coiled-coil conformation; it reads MDEEEQITEELQKLQQAKLAKTKRERKRANEKKARELLKLQLNMT. 3 disordered regions span residues 440 to 513, 535 to 715, and 806 to 841; these read IFDL…YDSY, NFDA…DEVK, and AKGRKKMKAVARMEKAKKKADGVMESEEMGDGEKAR. The segment covering 464–493 has biased composition (acidic residues); it reads DDGEGMDLASESEEEEDEDEEDDEVLDSDE. Over residues 535–545 the composition is skewed to basic and acidic residues; it reads NFDAWHGIQEK. 2 stretches are compositionally biased toward acidic residues: residues 546–564 and 579–591; these read SDEEGSDDDDGQDDDEEGG and DSSDSDSDAEPET. Positions 592-610 are enriched in basic and acidic residues; it reads EVPKKIKKVSFEKPARSEK. Composition is skewed to acidic residues over residues 650 to 678 and 685 to 712; these read DGDDEEEEEEDESEEEESDDEDVDMEDAS and EGDDDFEIVPQAPEDDGPEWDVDDEDQD. The segment covering 816–827 has biased composition (basic and acidic residues); sequence ARMEKAKKKADG.

It belongs to the class I-like SAM-binding methyltransferase superfamily. RNA methyltransferase RlmE family. SPB1 subfamily. As to quaternary structure, component of the nucleolar and nucleoplasmic pre-60S ribosomal particle.

It is found in the nucleus. The protein resides in the nucleolus. The enzyme catalyses a ribonucleotide in rRNA + S-adenosyl-L-methionine = a 2'-O-methylribonucleotide in rRNA + S-adenosyl-L-homocysteine + H(+). Its function is as follows. Required for proper assembly of pre-ribosomal particles during the biogenesis of the 60S ribosomal subunit. The sequence is that of AdoMet-dependent rRNA methyltransferase SPB1 from Cryptococcus neoformans var. neoformans serotype D (strain B-3501A) (Filobasidiella neoformans).